The sequence spans 273 residues: WIMGHMVNAIAQIDEFVNLGANSIETDVSFDSSANPEYTYHGVPCDCGRTCTKWKHFNEFLKGLRKATTPGDSKYHEKLVLVVFDLKTGSLYDNQASDAGKKLAKSLLQNYWNNGNNGGRAYIVLSIPNLAHYKLIAGFKEALTSEGHPELMDKVGYDFSGNDDIGDVANAYKKAGVTGHVWQSDGITNCLLRGLDRVRKAVANRDSSNGYINKVYYWTVDKRQSTRDALDAGVDGTMTNYPDVIADVLNESAYKAKFRIASYDDNPWETFKN.

The active site involves His5. Residues Glu25 and Asp27 each coordinate Mg(2+). His41 acts as the Nucleophile in catalysis. 2 disulfides stabilise this stretch: Cys45/Cys51 and Cys47/Cys190. Asp85 contributes to the Mg(2+) binding site. The N-linked (GlcNAc...) asparagine glycan is linked to Asn250.

This sequence belongs to the arthropod phospholipase D family. Class II subfamily. Mg(2+) serves as cofactor. As to expression, expressed by the venom gland.

The protein resides in the secreted. It carries out the reaction an N-(acyl)-sphingosylphosphocholine = an N-(acyl)-sphingosyl-1,3-cyclic phosphate + choline. The enzyme catalyses an N-(acyl)-sphingosylphosphoethanolamine = an N-(acyl)-sphingosyl-1,3-cyclic phosphate + ethanolamine. It catalyses the reaction a 1-acyl-sn-glycero-3-phosphocholine = a 1-acyl-sn-glycero-2,3-cyclic phosphate + choline. The catalysed reaction is a 1-acyl-sn-glycero-3-phosphoethanolamine = a 1-acyl-sn-glycero-2,3-cyclic phosphate + ethanolamine. Dermonecrotic toxins cleave the phosphodiester linkage between the phosphate and headgroup of certain phospholipids (sphingolipid and lysolipid substrates), forming an alcohol (often choline) and a cyclic phosphate. This toxin acts on sphingomyelin (SM). It may also act on ceramide phosphoethanolamine (CPE), lysophosphatidylcholine (LPC) and lysophosphatidylethanolamine (LPE), but not on lysophosphatidylserine (LPS), and lysophosphatidylglycerol (LPG). It acts by transphosphatidylation, releasing exclusively cyclic phosphate products as second products. Induces dermonecrosis, hemolysis, increased vascular permeability, edema, inflammatory response, and platelet aggregation. This is Dermonecrotic toxin LarSicTox-alphaIB1aiv from Loxosceles arizonica (Arizona brown spider).